The following is a 115-amino-acid chain: Ribonuclease P protein component (115 aa).

It belongs to the RnpA family. In terms of assembly, consists of a catalytic RNA component (M1 or rnpB) and a protein subunit.

The enzyme catalyses Endonucleolytic cleavage of RNA, removing 5'-extranucleotides from tRNA precursor.. Its function is as follows. RNaseP catalyzes the removal of the 5'-leader sequence from pre-tRNA to produce the mature 5'-terminus. It can also cleave other RNA substrates such as 4.5S RNA. The protein component plays an auxiliary but essential role in vivo by binding to the 5'-leader sequence and broadening the substrate specificity of the ribozyme. This is Ribonuclease P protein component from Bacillus cereus (strain 03BB102).